The following is a 408-amino-acid chain: Acetylornithine/succinyldiaminopimelate aminotransferase (408 aa).

Pyridoxal 5'-phosphate-binding positions include 108–109 (GA) and Phe141. Arg144 contributes to the N(2)-acetyl-L-ornithine binding site. 226–229 (DEIQ) is a binding site for pyridoxal 5'-phosphate. Lys255 carries the N6-(pyridoxal phosphate)lysine modification. N(2)-acetyl-L-ornithine is bound at residue Thr283. Thr284 lines the pyridoxal 5'-phosphate pocket.

This sequence belongs to the class-III pyridoxal-phosphate-dependent aminotransferase family. ArgD subfamily. As to quaternary structure, homodimer. Pyridoxal 5'-phosphate serves as cofactor.

Its subcellular location is the cytoplasm. It carries out the reaction N(2)-acetyl-L-ornithine + 2-oxoglutarate = N-acetyl-L-glutamate 5-semialdehyde + L-glutamate. It catalyses the reaction N-succinyl-(2S,6S)-2,6-diaminopimelate + 2-oxoglutarate = (S)-2-succinylamino-6-oxoheptanedioate + L-glutamate. It participates in amino-acid biosynthesis; L-arginine biosynthesis; N(2)-acetyl-L-ornithine from L-glutamate: step 4/4. The protein operates within amino-acid biosynthesis; L-lysine biosynthesis via DAP pathway; LL-2,6-diaminopimelate from (S)-tetrahydrodipicolinate (succinylase route): step 2/3. Involved in both the arginine and lysine biosynthetic pathways. The sequence is that of Acetylornithine/succinyldiaminopimelate aminotransferase from Buchnera aphidicola subsp. Acyrthosiphon pisum (strain APS) (Acyrthosiphon pisum symbiotic bacterium).